A 417-amino-acid chain; its full sequence is NADH-quinone oxidoreductase subunit D (417 aa).

This sequence belongs to the complex I 49 kDa subunit family. NDH-1 is composed of 14 different subunits. Subunits NuoB, C, D, E, F, and G constitute the peripheral sector of the complex.

It is found in the cell inner membrane. It carries out the reaction a quinone + NADH + 5 H(+)(in) = a quinol + NAD(+) + 4 H(+)(out). Functionally, NDH-1 shuttles electrons from NADH, via FMN and iron-sulfur (Fe-S) centers, to quinones in the respiratory chain. The immediate electron acceptor for the enzyme in this species is believed to be ubiquinone. Couples the redox reaction to proton translocation (for every two electrons transferred, four hydrogen ions are translocated across the cytoplasmic membrane), and thus conserves the redox energy in a proton gradient. The polypeptide is NADH-quinone oxidoreductase subunit D (Azoarcus sp. (strain BH72)).